Here is a 246-residue protein sequence, read N- to C-terminus: Protein-lysine N-methyltransferase EFM6 (246 aa).

S-adenosyl-L-methionine-binding positions include Trp-51, 87–89 (GSG), Asp-115, Trp-143, and Ala-169.

This sequence belongs to the class I-like SAM-binding methyltransferase superfamily. METTL21 family. EFM6 subfamily.

The protein resides in the cytoplasm. Functionally, S-adenosyl-L-methionine-dependent protein-lysine N-methyltransferase that methylates elongation factor 1-alpha (TEF1 and TEF2) at 'Lys-390'. This Saccharomyces cerevisiae (strain ATCC 204508 / S288c) (Baker's yeast) protein is Protein-lysine N-methyltransferase EFM6.